The chain runs to 178 residues: Large ribosomal subunit protein uL6 (178 aa).

This sequence belongs to the universal ribosomal protein uL6 family. In terms of assembly, part of the 50S ribosomal subunit.

In terms of biological role, this protein binds to the 23S rRNA, and is important in its secondary structure. It is located near the subunit interface in the base of the L7/L12 stalk, and near the tRNA binding site of the peptidyltransferase center. The sequence is that of Large ribosomal subunit protein uL6 from Frankia casuarinae (strain DSM 45818 / CECT 9043 / HFP020203 / CcI3).